The sequence spans 2300 residues: Protein Ycf2 (2300 aa).

1642–1649 (GSIGTGRS) is an ATP binding site.

The protein belongs to the Ycf2 family.

It localises to the plastid. Its subcellular location is the chloroplast stroma. In terms of biological role, probable ATPase of unknown function. Its presence in a non-photosynthetic plant (Epifagus virginiana) and experiments in tobacco indicate that it has an essential function which is probably not related to photosynthesis. The sequence is that of Protein Ycf2 from Vitis vinifera (Grape).